Reading from the N-terminus, the 411-residue chain is Exodeoxyribonuclease 7 large subunit (411 aa).

This sequence belongs to the XseA family. In terms of assembly, heterooligomer composed of large and small subunits.

The protein localises to the cytoplasm. The enzyme catalyses Exonucleolytic cleavage in either 5'- to 3'- or 3'- to 5'-direction to yield nucleoside 5'-phosphates.. Functionally, bidirectionally degrades single-stranded DNA into large acid-insoluble oligonucleotides, which are then degraded further into small acid-soluble oligonucleotides. The chain is Exodeoxyribonuclease 7 large subunit from Mycobacterium sp. (strain KMS).